A 251-amino-acid chain; its full sequence is Cell division protein ZapD (251 aa).

This sequence belongs to the ZapD family. Interacts with FtsZ.

It is found in the cytoplasm. Functionally, cell division factor that enhances FtsZ-ring assembly. Directly interacts with FtsZ and promotes bundling of FtsZ protofilaments, with a reduction in FtsZ GTPase activity. This Burkholderia cenocepacia (strain ATCC BAA-245 / DSM 16553 / LMG 16656 / NCTC 13227 / J2315 / CF5610) (Burkholderia cepacia (strain J2315)) protein is Cell division protein ZapD.